Consider the following 317-residue polypeptide: Sulfate adenylyltransferase subunit 2 (317 aa).

2 disordered regions span residues 1-21 (MPDS…APLD) and 298-317 (RAID…EGYF).

The protein belongs to the PAPS reductase family. CysD subfamily. Heterodimer composed of CysD, the smaller subunit, and CysN.

It carries out the reaction sulfate + ATP + H(+) = adenosine 5'-phosphosulfate + diphosphate. Its pathway is sulfur metabolism; hydrogen sulfide biosynthesis; sulfite from sulfate: step 1/3. Its function is as follows. With CysN forms the ATP sulfurylase (ATPS) that catalyzes the adenylation of sulfate producing adenosine 5'-phosphosulfate (APS) and diphosphate, the first enzymatic step in sulfur assimilation pathway. APS synthesis involves the formation of a high-energy phosphoric-sulfuric acid anhydride bond driven by GTP hydrolysis by CysN coupled to ATP hydrolysis by CysD. The protein is Sulfate adenylyltransferase subunit 2 of Rhizobium johnstonii (strain DSM 114642 / LMG 32736 / 3841) (Rhizobium leguminosarum bv. viciae).